The primary structure comprises 118 residues: Small ribosomal subunit protein uS13 (118 aa).

The tract at residues 94-118 is disordered; the sequence is SLPLRGQRTKTNARTRKGPRKPIKR.

The protein belongs to the universal ribosomal protein uS13 family. In terms of assembly, part of the 30S ribosomal subunit. Forms a loose heterodimer with protein S19. Forms two bridges to the 50S subunit in the 70S ribosome.

Functionally, located at the top of the head of the 30S subunit, it contacts several helices of the 16S rRNA. In the 70S ribosome it contacts the 23S rRNA (bridge B1a) and protein L5 of the 50S subunit (bridge B1b), connecting the 2 subunits; these bridges are implicated in subunit movement. Contacts the tRNAs in the A and P-sites. This is Small ribosomal subunit protein uS13 from Pseudoalteromonas translucida (strain TAC 125).